The following is a 560-amino-acid chain: DNA ligase B (560 aa).

Lys124 acts as the N6-AMP-lysine intermediate in catalysis.

This sequence belongs to the NAD-dependent DNA ligase family. LigB subfamily.

The enzyme catalyses NAD(+) + (deoxyribonucleotide)n-3'-hydroxyl + 5'-phospho-(deoxyribonucleotide)m = (deoxyribonucleotide)n+m + AMP + beta-nicotinamide D-nucleotide.. Functionally, catalyzes the formation of phosphodiester linkages between 5'-phosphoryl and 3'-hydroxyl groups in double-stranded DNA using NAD as a coenzyme and as the energy source for the reaction. The sequence is that of DNA ligase B from Escherichia coli (strain SMS-3-5 / SECEC).